The primary structure comprises 328 residues: dITP/XTP pyrophosphatase (328 aa).

The unknown stretch occupies residues 1-129; sequence MSEKIYEYKD…ATSEQGFGDT (129 aa). The segment at 130–324 is NTP pyrophosphatase; that stretch reads ILIATRNEGK…KLMEVFPAWQ (195 aa). Residue 134–139 coordinates substrate; sequence TRNEGK. D196 functions as the Proton acceptor in the catalytic mechanism. Mg(2+) is bound at residue D196. Residues S197, 280 to 283, K303, and 308 to 309 each bind substrate; these read FGYD and HR.

Belongs to the HAM1 NTPase family. As to quaternary structure, homodimer. Mg(2+) is required as a cofactor.

The catalysed reaction is XTP + H2O = XMP + diphosphate + H(+). It carries out the reaction dITP + H2O = dIMP + diphosphate + H(+). The enzyme catalyses ITP + H2O = IMP + diphosphate + H(+). Pyrophosphatase that catalyzes the hydrolysis of nucleoside triphosphates to their monophosphate derivatives, with a high preference for the non-canonical purine nucleotides XTP (xanthosine triphosphate), dITP (deoxyinosine triphosphate) and ITP. Seems to function as a house-cleaning enzyme that removes non-canonical purine nucleotides from the nucleotide pool, thus preventing their incorporation into DNA/RNA and avoiding chromosomal lesions. The protein is dITP/XTP pyrophosphatase of Streptococcus pyogenes serotype M6 (strain ATCC BAA-946 / MGAS10394).